The sequence spans 75 residues: DNA-directed RNA polymerase subunit omega (75 aa).

It belongs to the RNA polymerase subunit omega family. In cyanobacteria the RNAP catalytic core is composed of 2 alpha, 1 beta, 1 beta', 1 gamma and 1 omega subunit. When a sigma factor is associated with the core the holoenzyme is formed, which can initiate transcription.

It catalyses the reaction RNA(n) + a ribonucleoside 5'-triphosphate = RNA(n+1) + diphosphate. Promotes RNA polymerase assembly. Latches the N- and C-terminal regions of the beta' subunit thereby facilitating its interaction with the beta and alpha subunits. In Synechococcus sp. (strain CC9605), this protein is DNA-directed RNA polymerase subunit omega.